Consider the following 1176-residue polypeptide: 3-hydroxy-3-methylglutaryl-coenzyme A reductase (1176 aa).

The Cytoplasmic segment spans residues 1 to 34 (MSLPNHSGSSAFKSFSYIVGTGIKRAAKLSTRNP). A helical membrane pass occupies residues 35-55 (IEMIVVVLILSSFSYFYLFNL). The Lumenal segment spans residues 56–299 (ARTSDIFSGT…VKELIDLADN (244 aa)). N-linked (GlcNAc...) asparagine glycosylation is found at Asn-224 and Asn-238. A helical transmembrane segment spans residues 300–320 (IDIIVILVGYIMMIATFISLY). The 165-residue stretch at 301–465 (DIIVILVGYI…FTWYTAVLAL (165 aa)) folds into the SSD domain. Residues 321–330 (VNMRAMGSRY) are Cytoplasmic-facing. Residues 331–351 (TLATAVVFNGFFSFMLALLTV) traverse the membrane as a helical segment. Residues 352–355 (RALG) lie on the Lumenal side of the membrane. A helical transmembrane segment spans residues 356–376 (VDVYPVVLAEAIPFLAVTIGF). At 377 to 422 (ERPFKLTKRVFQFSKETPLTKQEIRTTIMRAVDTVALPIARDCFME) the chain is on the cytoplasmic side. A helical transmembrane segment spans residues 423 to 443 (IIVLVLGAKSGISGLEEFCLL). Ser-444 is a topological domain (lumenal). A helical transmembrane segment spans residues 445-465 (AILLAYDFIIMFTWYTAVLAL). Residues 466-524 (KLELLRIREINGISADDIKKGTKKSTGYIRRTVIKAFSDDHAAGANTANQKADGPIIGR) lie on the Cytoplasmic side of the membrane. The chain crosses the membrane as a helical span at residues 525–545 (VKLLMIVGFVVMHIFKFCSAF). The Lumenal segment spans residues 546-622 (QSVGPQVNIT…DTYAVYIQHP (77 aa)). Asn-553 and Asn-596 each carry an N-linked (GlcNAc...) asparagine glycan. Residues 623 to 643 (VISKWLTIALFVSLFLNTYLF) traverse the membrane as a helical segment. At 644–1176 (NVAKQPKQIV…GTEPGTCIKS (533 aa)) the chain is on the cytoplasmic side. The segment at 699–724 (PNHKRSHNHHHSHSHSHNHHSNHHQS) is disordered. The segment covering 700-721 (NHKRSHNHHHSHSHSHNHHSNH) has biased composition (basic residues). The active-site Charge relay system is the Glu-841. Residue 847–853 (STARGCK) participates in CoA binding. Residues 907 to 909 (SRF) and 934 to 942 (DAMGMNMIS) contribute to the NADP(+) site. Lys-972 acts as the Charge relay system in catalysis. 1001–1003 (VLK) lines the CoA pocket. Asp-1048 (charge relay system) is an active-site residue. Residue 1145–1146 (AH) participates in CoA binding. The Proton donor role is filled by His-1146. 1150-1151 (NR) lines the NADP(+) pocket. The interval 1153-1176 (TQAPTITSGPAPSTGTEPGTCIKS) is disordered.

Belongs to the HMG-CoA reductase family.

It localises to the endoplasmic reticulum membrane. It catalyses the reaction (R)-mevalonate + 2 NADP(+) + CoA = (3S)-3-hydroxy-3-methylglutaryl-CoA + 2 NADPH + 2 H(+). It functions in the pathway metabolic intermediate biosynthesis; (R)-mevalonate biosynthesis; (R)-mevalonate from acetyl-CoA: step 3/3. In terms of biological role, HMG-CoA reductase; part of the first module of ergosterol biosynthesis pathway that includes the early steps of the pathway, conserved across all eukaryotes, and which results in the formation of mevalonate from acetyl-coenzyme A (acetyl-CoA). In this module, the cytosolic acetyl-CoA acetyltransferase catalyzes the formation of acetoacetyl-CoA. The hydroxymethylglutaryl-CoA synthase then condenses acetyl-CoA with acetoacetyl-CoA to form HMG-CoA. The rate-limiting step of the early module is the reduction to mevalonate by the 3-hydroxy-3-methylglutaryl-coenzyme A (HMG-CoA) reductase hmgA. This chain is 3-hydroxy-3-methylglutaryl-coenzyme A reductase, found in Phycomyces blakesleeanus (strain ATCC 8743b / DSM 1359 / FGSC 10004 / NBRC 33097 / NRRL 1555).